A 373-amino-acid chain; its full sequence is Protein U3 (373 aa).

It belongs to the herpesviridae US22 family.

This is Protein U3 (U3) from Human herpesvirus 6A (strain Uganda-1102) (HHV-6 variant A).